The sequence spans 501 residues: Serine/threonine protein phosphatase 2A 55 kDa regulatory subunit B beta isoform (501 aa).

M1 carries the post-translational modification N-acetylmethionine. WD repeat units follow at residues 34 to 73, 110 to 151, 220 to 258, 269 to 309, and 328 to 366; these read QEVDIISAIEFDKSGDHLATGDRGGRVVLFERTDTKDHGG, EIEE…IKKI, AHDYHINSISNSSDGETFISADDLRVNLWNLEISNQSFN, DLTE…LCDS, and EIIASISDIKFSKDGRYILSRDYMTLKLWDINMDSGPVA. Residues 439–449 show a composition bias toward polar residues; sequence TPARPSRSIGS. A disordered region spans residues 439–466; sequence TPARPSRSIGSMTRVVRRGSESPGTEAN. Residues 471–501 form a WD 6 repeat; it reads DFTTKLLHMAWHPTENSIACAAANSLYMYYA.

This sequence belongs to the phosphatase 2A regulatory subunit B family. In terms of assembly, PP2A consists of a common heteromeric enzyme, composed of a catalytic subunit (subunits C), a constant regulatory subunit (subunit A), and a variety of regulatory subunits such as subunits B (the R2/B/PR55/B55, R3/B''/PR72/PR130/PR59 and R5/B'/B56 families). Interacts with SIC/RON3. Expressed ubiquitously.

Its function is as follows. The B regulatory subunit may modulate substrate selectivity and catalytic activity, and may also direct the localization of the catalytic enzyme to a particular subcellular compartment. This Arabidopsis thaliana (Mouse-ear cress) protein is Serine/threonine protein phosphatase 2A 55 kDa regulatory subunit B beta isoform (PP2AB2).